A 117-amino-acid polypeptide reads, in one-letter code: Large ribosomal subunit protein bL20 (117 aa).

The protein belongs to the bacterial ribosomal protein bL20 family.

Functionally, binds directly to 23S ribosomal RNA and is necessary for the in vitro assembly process of the 50S ribosomal subunit. It is not involved in the protein synthesizing functions of that subunit. This is Large ribosomal subunit protein bL20 from Rippkaea orientalis (strain PCC 8801 / RF-1) (Cyanothece sp. (strain PCC 8801)).